The primary structure comprises 162 residues: MSKVAIYPGTFDPITNGHVDLVDRALNIFDRIVVAVSTAYGKKTLFDLDTRELMIKEVFKDNDRVKVVSFEGLLVDTAVKHGACAIVRGLRAVSDFDYEFQMSSMNNKLNSDIQTIFLTPSEKFSCISSTLVRAVAIHNYQRVGEFVPECVFDRIELKYSKD.

Substrate is bound at residue threonine 10. ATP is bound by residues 10 to 11 (TF) and histidine 18. Lysine 42, leucine 74, and arginine 88 together coordinate substrate. ATP-binding positions include 89-91 (GLR), glutamate 99, and 124-130 (FSCISST).

The protein belongs to the bacterial CoaD family. Homohexamer. Mg(2+) is required as a cofactor.

The protein localises to the cytoplasm. The catalysed reaction is (R)-4'-phosphopantetheine + ATP + H(+) = 3'-dephospho-CoA + diphosphate. It participates in cofactor biosynthesis; coenzyme A biosynthesis; CoA from (R)-pantothenate: step 4/5. Reversibly transfers an adenylyl group from ATP to 4'-phosphopantetheine, yielding dephospho-CoA (dPCoA) and pyrophosphate. In Francisella philomiragia subsp. philomiragia (strain ATCC 25017 / CCUG 19701 / FSC 153 / O#319-036), this protein is Phosphopantetheine adenylyltransferase.